Consider the following 474-residue polypeptide: UDP-glycosyltransferase 71E1 (474 aa).

UDP-alpha-D-glucose is bound by residues Ser-275, 341–342, 359–367, and 381–384; these read WA, HCGWNSTLE, and YAEQ.

This sequence belongs to the UDP-glycosyltransferase family.

Its function is as follows. May glycosylate diterpenes or flavonols in leaves. In Stevia rebaudiana (Stevia), this protein is UDP-glycosyltransferase 71E1.